Consider the following 454-residue polypeptide: Chaperone SurA (454 aa).

The first 28 residues, 1 to 28 (MKISSFRKGRWLGALALFAVVCWSMADA), serve as a signal peptide directing secretion. 2 consecutive PpiC domains span residues 177 to 278 (DREY…KMLA) and 287 to 386 (LTKT…QVLE). A disordered region spans residues 431–454 (LDETPASPGEDAPAGEDSPETFMR). A compositionally biased stretch (acidic residues) spans 443-454 (PAGEDSPETFMR).

The protein localises to the periplasm. The enzyme catalyses [protein]-peptidylproline (omega=180) = [protein]-peptidylproline (omega=0). Chaperone involved in the correct folding and assembly of outer membrane proteins. Recognizes specific patterns of aromatic residues and the orientation of their side chains, which are found more frequently in integral outer membrane proteins. May act in both early periplasmic and late outer membrane-associated steps of protein maturation. This Methylococcus capsulatus (strain ATCC 33009 / NCIMB 11132 / Bath) protein is Chaperone SurA.